The following is a 418-amino-acid chain: tRNA-2-methylthio-N(6)-dimethylallyladenosine synthase (418 aa).

One can recognise an MTTase N-terminal domain in the interval 2–118 (PGYYLWTIGC…WREIPEGFIL (117 aa)). 6 residues coordinate [4Fe-4S] cluster: Cys-11, Cys-47, Cys-81, Cys-134, Cys-138, and Cys-141. The 232-residue stretch at 120-351 (LRPPVSANVT…EDLQKETVGK (232 aa)) folds into the Radical SAM core domain. In terms of domain architecture, TRAM spans 346–414 (KETVGKANAA…PWSLQAKLVN (69 aa)).

Belongs to the methylthiotransferase family. MiaB subfamily. As to quaternary structure, monomer. Requires [4Fe-4S] cluster as cofactor.

It is found in the cytoplasm. It catalyses the reaction N(6)-dimethylallyladenosine(37) in tRNA + (sulfur carrier)-SH + AH2 + 2 S-adenosyl-L-methionine = 2-methylsulfanyl-N(6)-dimethylallyladenosine(37) in tRNA + (sulfur carrier)-H + 5'-deoxyadenosine + L-methionine + A + S-adenosyl-L-homocysteine + 2 H(+). In terms of biological role, catalyzes the methylthiolation of N6-(dimethylallyl)adenosine (i(6)A), leading to the formation of 2-methylthio-N6-(dimethylallyl)adenosine (ms(2)i(6)A) at position 37 in tRNAs that read codons beginning with uridine. The sequence is that of tRNA-2-methylthio-N(6)-dimethylallyladenosine synthase from Dehalococcoides mccartyi (strain CBDB1).